Here is a 414-residue protein sequence, read N- to C-terminus: Na(+)-translocating NADH-quinone reductase subunit B (414 aa).

The next 3 membrane-spanning stretches (helical) occupy residues 56–76 (IMIM…YNAG), 129–149 (FLPI…LFCM), and 164–184 (ILFA…LGIT). An FMN phosphoryl threonine modification is found at Thr-236. The next 5 helical transmembrane spans lie at 268-288 (IPGS…AMIV), 297-317 (IIAG…VIGS), 325-345 (MPWH…FMAT), 358-378 (WWYG…NPAY), and 381-401 (GMML…HVVI).

The protein belongs to the NqrB/RnfD family. In terms of assembly, composed of six subunits; NqrA, NqrB, NqrC, NqrD, NqrE and NqrF. Requires FMN as cofactor.

The protein localises to the cell inner membrane. The enzyme catalyses a ubiquinone + n Na(+)(in) + NADH + H(+) = a ubiquinol + n Na(+)(out) + NAD(+). With respect to regulation, this reaction is tightly coupled to the Na(+) pumping activity and specifically requires Na(+) for activity. Inhibited by korormicin and 2-N-heptyl-4-hydroxyquinoline N-oxide (HQNO). Functionally, NQR complex catalyzes the reduction of ubiquinone-1 to ubiquinol by two successive reactions, coupled with the transport of Na(+) ions from the cytoplasm to the periplasm. NqrA to NqrE are probably involved in the second step, the conversion of ubisemiquinone to ubiquinol. The chain is Na(+)-translocating NADH-quinone reductase subunit B from Vibrio alginolyticus.